A 256-amino-acid chain; its full sequence is Imidazole glycerol phosphate synthase subunit HisF (256 aa).

Active-site residues include Asp-12 and Asp-131.

The protein belongs to the HisA/HisF family. Heterodimer of HisH and HisF.

Its subcellular location is the cytoplasm. It carries out the reaction 5-[(5-phospho-1-deoxy-D-ribulos-1-ylimino)methylamino]-1-(5-phospho-beta-D-ribosyl)imidazole-4-carboxamide + L-glutamine = D-erythro-1-(imidazol-4-yl)glycerol 3-phosphate + 5-amino-1-(5-phospho-beta-D-ribosyl)imidazole-4-carboxamide + L-glutamate + H(+). It functions in the pathway amino-acid biosynthesis; L-histidine biosynthesis; L-histidine from 5-phospho-alpha-D-ribose 1-diphosphate: step 5/9. Its function is as follows. IGPS catalyzes the conversion of PRFAR and glutamine to IGP, AICAR and glutamate. The HisF subunit catalyzes the cyclization activity that produces IGP and AICAR from PRFAR using the ammonia provided by the HisH subunit. This Stutzerimonas stutzeri (strain A1501) (Pseudomonas stutzeri) protein is Imidazole glycerol phosphate synthase subunit HisF.